A 198-amino-acid polypeptide reads, in one-letter code: Peroxiredoxin-2 (198 aa).

Alanine 2 is subject to N-acetylalanine. Residues 6–164 (AHIGKPAPDF…ALRLVQAFQY (159 aa)) form the Thioredoxin domain. Cysteine 51 functions as the Cysteine sulfenic acid (-SOH) intermediate in the catalytic mechanism. Serine 112 is subject to Phosphoserine. A Phosphothreonine modification is found at threonine 182. Lysine 196 bears the N6-acetyllysine mark.

Belongs to the peroxiredoxin family. AhpC/Prx1 subfamily. Homodimer; disulfide-linked, upon oxidation. 5 homodimers assemble to form a ring-like decamer. Interacts with TIPIN. In terms of processing, the enzyme can be inactivated by further oxidation of the cysteine sulfenic acid (C(P)-SOH) to sulphinic acid (C(P)-SO2H) instead of its condensation to a disulfide bond. It can be reactivated by forming a transient disulfide bond with sulfiredoxin SRXN1, which reduces the cysteine sulfinic acid in an ATP- and Mg-dependent manner. Post-translationally, acetylation increases resistance to transition to high molecular-mass complexes. Deacetylated by HDAC6 which decreases reducing activity.

It localises to the cytoplasm. The enzyme catalyses a hydroperoxide + [thioredoxin]-dithiol = an alcohol + [thioredoxin]-disulfide + H2O. Thiol-specific peroxidase that catalyzes the reduction of hydrogen peroxide and organic hydroperoxides to water and alcohols, respectively. Plays a role in cell protection against oxidative stress by detoxifying peroxides and as sensor of hydrogen peroxide-mediated signaling events. Might participate in the signaling cascades of growth factors and tumor necrosis factor-alpha by regulating the intracellular concentrations of H(2)O(2). The polypeptide is Peroxiredoxin-2 (Prdx2) (Rattus norvegicus (Rat)).